Consider the following 84-residue polypeptide: UPF0248 protein Pisl_1919 (84 aa).

It belongs to the UPF0248 family.

The sequence is that of UPF0248 protein Pisl_1919 from Pyrobaculum islandicum (strain DSM 4184 / JCM 9189 / GEO3).